Reading from the N-terminus, the 206-residue chain is Protein GrpE (206 aa).

Positions 1–64 are disordered; it reads MSKKASMHKE…KALEEAQQQA (64 aa). Over residues 46–58 the composition is skewed to basic and acidic residues; sequence SDAKVQELEKALE.

It belongs to the GrpE family. In terms of assembly, homodimer.

It is found in the cytoplasm. Its function is as follows. Participates actively in the response to hyperosmotic and heat shock by preventing the aggregation of stress-denatured proteins, in association with DnaK and GrpE. It is the nucleotide exchange factor for DnaK and may function as a thermosensor. Unfolded proteins bind initially to DnaJ; upon interaction with the DnaJ-bound protein, DnaK hydrolyzes its bound ATP, resulting in the formation of a stable complex. GrpE releases ADP from DnaK; ATP binding to DnaK triggers the release of the substrate protein, thus completing the reaction cycle. Several rounds of ATP-dependent interactions between DnaJ, DnaK and GrpE are required for fully efficient folding. This chain is Protein GrpE, found in Prosthecochloris aestuarii (strain DSM 271 / SK 413).